The following is a 194-amino-acid chain: MEQVVLLNDSGQAIGVTDKATVHHLDTPLHLAFSCYVFNGRGQLLLTQRAHEKRTWPGVWTNTCCGHPAPQEAMPEAITRRLGEELGLTVRDLTLVLPRFRYRAVMGNGVVENEICPVFAAFTDDEPAPNREEVAGTAWADWSGFSAEVLAGTTDISPWCRQQVAELVELGANPAEWPAADPADLPDAAVIAAG.

Mn(2+)-binding residues include histidine 23 and histidine 30. Residues 28–162 (PLHLAFSCYV…TTDISPWCRQ (135 aa)) form the Nudix hydrolase domain. Residue cysteine 65 is part of the active site. Residue histidine 67 participates in Mn(2+) binding. Residue glutamate 85 participates in Mg(2+) binding. Mn(2+) contacts are provided by glutamate 112 and glutamate 114. The active site involves glutamate 114.

It belongs to the IPP isomerase type 1 family. Requires Mg(2+) as cofactor. The cofactor is Mn(2+).

The protein resides in the cytoplasm. The enzyme catalyses isopentenyl diphosphate = dimethylallyl diphosphate. Its pathway is isoprenoid biosynthesis; dimethylallyl diphosphate biosynthesis; dimethylallyl diphosphate from isopentenyl diphosphate: step 1/1. In terms of biological role, catalyzes the 1,3-allylic rearrangement of the homoallylic substrate isopentenyl (IPP) to its highly electrophilic allylic isomer, dimethylallyl diphosphate (DMAPP). This chain is Isopentenyl-diphosphate Delta-isomerase, found in Saccharopolyspora erythraea (strain ATCC 11635 / DSM 40517 / JCM 4748 / NBRC 13426 / NCIMB 8594 / NRRL 2338).